Here is a 677-residue protein sequence, read N- to C-terminus: Methionine--tRNA ligase (677 aa).

Residues 15-25 (PYANGSIHLGH) carry the 'HIGH' region motif. Positions 146, 149, 159, and 162 each coordinate Zn(2+). The 'KMSKS' region motif lies at 333–337 (KMSKS). Residue K336 participates in ATP binding. The region spanning 575-677 (DFAKIDLRVA…DGAKPGQQVK (103 aa)) is the tRNA-binding domain.

This sequence belongs to the class-I aminoacyl-tRNA synthetase family. MetG type 1 subfamily. Homodimer. Zn(2+) serves as cofactor.

It localises to the cytoplasm. The enzyme catalyses tRNA(Met) + L-methionine + ATP = L-methionyl-tRNA(Met) + AMP + diphosphate. In terms of biological role, is required not only for elongation of protein synthesis but also for the initiation of all mRNA translation through initiator tRNA(fMet) aminoacylation. This Salmonella paratyphi A (strain AKU_12601) protein is Methionine--tRNA ligase.